A 502-amino-acid chain; its full sequence is Probable cytochrome P450 313b1 (502 aa).

Position 449 (C449) interacts with heme.

It belongs to the cytochrome P450 family. The cofactor is heme.

It is found in the endoplasmic reticulum membrane. The protein resides in the microsome membrane. May be involved in the metabolism of insect hormones and in the breakdown of synthetic insecticides. This is Probable cytochrome P450 313b1 (Cyp313b1) from Drosophila melanogaster (Fruit fly).